Reading from the N-terminus, the 49-residue chain is Large ribosomal subunit protein bL33B (49 aa).

It belongs to the bacterial ribosomal protein bL33 family.

This is Large ribosomal subunit protein bL33B from Bacillus anthracis.